The sequence spans 815 residues: Lon protease 1 (815 aa).

Residues 19-212 (MPLLPLRDIV…KLFGQIRSEI (194 aa)) form the Lon N-terminal domain. 364 to 371 (GPPGVGKT) serves as a coordination point for ATP. Positions 601-782 (KDEIGLAVGL…DDVLRKAMVV (182 aa)) constitute a Lon proteolytic domain. Catalysis depends on residues S688 and K731. The interval 793 to 815 (EAGAQQAVMFEQKPPAADEIRAH) is disordered.

This sequence belongs to the peptidase S16 family. In terms of assembly, homohexamer. Organized in a ring with a central cavity.

It localises to the cytoplasm. It catalyses the reaction Hydrolysis of proteins in presence of ATP.. Its function is as follows. ATP-dependent serine protease that mediates the selective degradation of mutant and abnormal proteins as well as certain short-lived regulatory proteins. Required for cellular homeostasis and for survival from DNA damage and developmental changes induced by stress. Degrades polypeptides processively to yield small peptide fragments that are 5 to 10 amino acids long. Binds to DNA in a double-stranded, site-specific manner. This is Lon protease 1 from Syntrophobacter fumaroxidans (strain DSM 10017 / MPOB).